A 778-amino-acid chain; its full sequence is MKENNKTIEAKNKELRDATKEFNEKLQKFLKDKVKKGFQIKNPNYKIDDNKISSNEVFKNNKNDFELNLPKNTWEEKTNKPESFENYKNVIPPYEDKFLPENFKEKFAPKNIKSEPLINKKDNLKEKNNNPVFDEVKIQEDDKFFDFSKFSETVSNQPENILKIEENDFKEIHDDFVSQYETFSKLETKENTNDLKTNLSSDTIKTIESKNEPEVQIESEIKDDSLEKEISEDDSFMDIFKAEQPDNQEDDSFVIDEEKAKEEYQEIKTNKSIVSDSHKIDIYEENEDLMKLNTLKSDKGIIYQIFGPVVDVKFARNQMPNINDCLEVKLPNNKKLVLEVALLEGDDVARCISMGSTEGLYRGLEVINTKNPIMAPVGSAVLGRMFNVVGEPIDNKPMPEKVEYSPIHKKPPSFDEQSTKTEIFETGIKVIDLLVPYVKGGKIGLFGGAGVGKTVLVQELIHNIATGHGGLSIFAGVGERTREGNDLYHEMIDGGVINQTALVFGQMNEPPGARMRVALTALTMAEHFRENNKQDVLLFIDNIFRFSQAGSEVSALLGRIPSAVGYQPTLAFEMGQLQERITSTKSGSITSVQAVYVPADDLTDPAPSTTFAHLDAKTVLDRKIASLGIYPAINPLESSSRMLDPSIVGIEHYKVARSVQTILQKFEELQDIIAILGIDELSEEDKLTVSRARKIRNFLSQPFFVAEKFSHKSGKYVSTQDTISGFSEIIEGKCDDIPEQYFLYVGGIDDVHKNYVAANSNNKVNSSNKPLNSENKSN.

A unknown region spans residues 1-289; sequence MKENNKTIEA…IDIYEENEDL (289 aa). Positions 290-778 are ATP synthase subunit beta; it reads MKLNTLKSDK…KPLNSENKSN (489 aa). 447–454 lines the ATP pocket; that stretch reads GGAGVGKT.

Belongs to the ATPase alpha/beta chains family. In terms of assembly, F-type ATPases have 2 components, CF(1) - the catalytic core - and CF(0) - the membrane proton channel. CF(1) has five subunits: alpha(3), beta(3), gamma(1), delta(1), epsilon(1). CF(0) has three main subunits: a(1), b(2) and c(9-12). The alpha and beta chains form an alternating ring which encloses part of the gamma chain. CF(1) is attached to CF(0) by a central stalk formed by the gamma and epsilon chains, while a peripheral stalk is formed by the delta and b chains.

The protein resides in the cell membrane. The catalysed reaction is ATP + H2O + 4 H(+)(in) = ADP + phosphate + 5 H(+)(out). Its function is as follows. Produces ATP from ADP in the presence of a proton gradient across the membrane. The catalytic sites are hosted primarily by the beta subunits. This Malacoplasma penetrans (strain HF-2) (Mycoplasma penetrans) protein is ATP synthase subunit beta (atpD).